The following is a 316-amino-acid chain: Adenine deaminase (316 aa).

Positions 14, 16, and 194 each coordinate Zn(2+). The Proton donor role is filled by Glu-197. Asp-275 is a binding site for Zn(2+). Residue Asp-276 coordinates substrate.

The protein belongs to the metallo-dependent hydrolases superfamily. Adenosine and AMP deaminases family. Adenine deaminase type 2 subfamily. Zn(2+) serves as cofactor.

It catalyses the reaction adenine + H2O + H(+) = hypoxanthine + NH4(+). Functionally, catalyzes the hydrolytic deamination of adenine to hypoxanthine. Plays an important role in the purine salvage pathway and in nitrogen catabolism. The protein is Adenine deaminase of Pseudomonas aeruginosa (strain LESB58).